Reading from the N-terminus, the 289-residue chain is ATP synthase gamma chain (289 aa).

The protein belongs to the ATPase gamma chain family. In terms of assembly, F-type ATPases have 2 components, CF(1) - the catalytic core - and CF(0) - the membrane proton channel. CF(1) has five subunits: alpha(3), beta(3), gamma(1), delta(1), epsilon(1). CF(0) has three main subunits: a, b and c.

The protein resides in the cell inner membrane. Produces ATP from ADP in the presence of a proton gradient across the membrane. The gamma chain is believed to be important in regulating ATPase activity and the flow of protons through the CF(0) complex. This Dichelobacter nodosus (strain VCS1703A) protein is ATP synthase gamma chain.